The following is a 457-amino-acid chain: Adenylosuccinate synthetase isozyme 1 (457 aa).

The disordered stretch occupies residues 1-21 (MSGTRASNDRPPGAGGVKRGR). Residues 42 to 48 (GDEGKGK) and 70 to 72 (GHT) each bind GTP. D43 functions as the Proton acceptor in the catalytic mechanism. Positions 43 and 70 each coordinate Mg(2+). A substrate-binding site is contributed by D43. Residues 43 to 46 (DEGK), 68 to 71 (NAGH), T163, R177, N256, T271, and R335 each bind IMP. H71 functions as the Proton donor in the catalytic mechanism. Substrate is bound at residue 331 to 337 (VTTGRKR). GTP is bound by residues R337, 363–365 (KLD), and 445–448 (GVGK).

Belongs to the adenylosuccinate synthetase family. Homodimer. Mg(2+) is required as a cofactor. In terms of tissue distribution, predominantly expressed in skeletal muscle and heart, as well as in several hematopoietic cell lines and solid tumors.

The protein resides in the cytoplasm. It catalyses the reaction IMP + L-aspartate + GTP = N(6)-(1,2-dicarboxyethyl)-AMP + GDP + phosphate + 2 H(+). It functions in the pathway purine metabolism; AMP biosynthesis via de novo pathway; AMP from IMP: step 1/2. Its function is as follows. Component of the purine nucleotide cycle (PNC), which interconverts IMP and AMP to regulate the nucleotide levels in various tissues, and which contributes to glycolysis and ammoniagenesis. Catalyzes the first committed step in the biosynthesis of AMP from IMP. This is Adenylosuccinate synthetase isozyme 1 from Homo sapiens (Human).